Here is a 147-residue protein sequence, read N- to C-terminus: UPF0460 protein in nifX-nifW intergenic region (147 aa).

The protein belongs to the UPF0460 family.

In Frankia alni, this protein is UPF0460 protein in nifX-nifW intergenic region.